Reading from the N-terminus, the 322-residue chain is Biotin synthase (322 aa).

The Radical SAM core domain occupies 39–266; that stretch reads NQIQVSSLLN…KSVVRLSAGR (228 aa). [4Fe-4S] cluster-binding residues include cysteine 54, cysteine 58, and cysteine 61. [2Fe-2S] cluster is bound by residues cysteine 98, cysteine 129, cysteine 189, and arginine 261.

This sequence belongs to the radical SAM superfamily. Biotin synthase family. In terms of assembly, homodimer. [4Fe-4S] cluster serves as cofactor. [2Fe-2S] cluster is required as a cofactor.

The enzyme catalyses (4R,5S)-dethiobiotin + (sulfur carrier)-SH + 2 reduced [2Fe-2S]-[ferredoxin] + 2 S-adenosyl-L-methionine = (sulfur carrier)-H + biotin + 2 5'-deoxyadenosine + 2 L-methionine + 2 oxidized [2Fe-2S]-[ferredoxin]. It functions in the pathway cofactor biosynthesis; biotin biosynthesis; biotin from 7,8-diaminononanoate: step 2/2. In terms of biological role, catalyzes the conversion of dethiobiotin (DTB) to biotin by the insertion of a sulfur atom into dethiobiotin via a radical-based mechanism. This is Biotin synthase from Ruthia magnifica subsp. Calyptogena magnifica.